We begin with the raw amino-acid sequence, 455 residues long: Ribulose bisphosphate carboxylase large chain (455 aa).

Lys5 is modified (N6,N6,N6-trimethyllysine). Substrate-binding residues include Asn114 and Thr164. Lys166 serves as the catalytic Proton acceptor. Lys168 is a binding site for substrate. Mg(2+)-binding residues include Lys192, Asp194, and Glu195. Lys192 bears the N6-carboxylysine mark. The active-site Proton acceptor is the His285. 3 residues coordinate substrate: Arg286, His318, and Ser370.

It belongs to the RuBisCO large chain family. Type I subfamily. In terms of assembly, heterohexadecamer of 8 large chains and 8 small chains; disulfide-linked. The disulfide link is formed within the large subunit homodimers. It depends on Mg(2+) as a cofactor. In terms of processing, the disulfide bond which can form in the large chain dimeric partners within the hexadecamer appears to be associated with oxidative stress and protein turnover.

Its subcellular location is the plastid. The protein resides in the chloroplast. The catalysed reaction is 2 (2R)-3-phosphoglycerate + 2 H(+) = D-ribulose 1,5-bisphosphate + CO2 + H2O. It catalyses the reaction D-ribulose 1,5-bisphosphate + O2 = 2-phosphoglycolate + (2R)-3-phosphoglycerate + 2 H(+). RuBisCO catalyzes two reactions: the carboxylation of D-ribulose 1,5-bisphosphate, the primary event in carbon dioxide fixation, as well as the oxidative fragmentation of the pentose substrate in the photorespiration process. Both reactions occur simultaneously and in competition at the same active site. This Lupinus nanus (Sky lupine) protein is Ribulose bisphosphate carboxylase large chain.